The chain runs to 250 residues: Triosephosphate isomerase (250 aa).

9-11 (NWK) serves as a coordination point for substrate. Catalysis depends on H95, which acts as the Electrophile. The Proton acceptor role is filled by E167. Substrate is bound by residues G173, S212, and 233 to 234 (GG).

It belongs to the triosephosphate isomerase family. In terms of assembly, homodimer.

It is found in the cytoplasm. It catalyses the reaction D-glyceraldehyde 3-phosphate = dihydroxyacetone phosphate. It participates in carbohydrate biosynthesis; gluconeogenesis. Its pathway is carbohydrate degradation; glycolysis; D-glyceraldehyde 3-phosphate from glycerone phosphate: step 1/1. In terms of biological role, involved in the gluconeogenesis. Catalyzes stereospecifically the conversion of dihydroxyacetone phosphate (DHAP) to D-glyceraldehyde-3-phosphate (G3P). This chain is Triosephosphate isomerase, found in Nitrosococcus oceani (strain ATCC 19707 / BCRC 17464 / JCM 30415 / NCIMB 11848 / C-107).